The chain runs to 144 residues: Large ribosomal subunit protein uL11 (144 aa).

Belongs to the universal ribosomal protein uL11 family. Part of the ribosomal stalk of the 50S ribosomal subunit. Interacts with L10 and the large rRNA to form the base of the stalk. L10 forms an elongated spine to which L12 dimers bind in a sequential fashion forming a multimeric L10(L12)X complex. One or more lysine residues are methylated.

Its function is as follows. Forms part of the ribosomal stalk which helps the ribosome interact with GTP-bound translation factors. The sequence is that of Large ribosomal subunit protein uL11 from Saccharopolyspora erythraea (strain ATCC 11635 / DSM 40517 / JCM 4748 / NBRC 13426 / NCIMB 8594 / NRRL 2338).